Consider the following 320-residue polypeptide: tRNA-cytidine(32) 2-sulfurtransferase (320 aa).

The short motif at Ser54 to Ser59 is the PP-loop motif element. Cys129, Cys132, and Cys220 together coordinate [4Fe-4S] cluster.

The protein belongs to the TtcA family. As to quaternary structure, homodimer. Mg(2+) serves as cofactor. [4Fe-4S] cluster is required as a cofactor.

It localises to the cytoplasm. The catalysed reaction is cytidine(32) in tRNA + S-sulfanyl-L-cysteinyl-[cysteine desulfurase] + AH2 + ATP = 2-thiocytidine(32) in tRNA + L-cysteinyl-[cysteine desulfurase] + A + AMP + diphosphate + H(+). It participates in tRNA modification. Functionally, catalyzes the ATP-dependent 2-thiolation of cytidine in position 32 of tRNA, to form 2-thiocytidine (s(2)C32). The sulfur atoms are provided by the cysteine/cysteine desulfurase (IscS) system. The polypeptide is tRNA-cytidine(32) 2-sulfurtransferase (Bordetella bronchiseptica (strain ATCC BAA-588 / NCTC 13252 / RB50) (Alcaligenes bronchisepticus)).